The following is a 314-amino-acid chain: MXKKNFIPSVSLVRRDLPTLVTTTTSSTALSKPTSSVVSETSSKSLPSLTSSAFSTSSGXTSSSSLIVASITPPSTVGNPFILNAADKPNGTVYIAVGAVIGAIFISILIWWLVSXYLSRRFTMTNSYANDSKNLYRGHHKHSSSLQSNPFDINDEKSYMQDDWDSMSQLESSQYEDAASPFNPIQDPFTDNRRSLFISPTLQVSQYEKSHSRHQSKDTNIFIDDPSLYVGTYLEEEEEEERKLNLNRPQRAASPERKEKKINSMEGYHKRNQSSLGLIPVASATSNTSSPKKAHKRQAPSMFLDDVLNGREII.

The segment at 32-59 (KPTSSVVSETSSKSLPSLTSSAFSTSSG) is disordered. Residues 93–113 (VYIAVGAVIGAIFISILIWWL) traverse the membrane as a helical segment. Phosphoserine occurs at positions 148, 254, and 274. Residues 240 to 309 (EERKLNLNRP…PSMFLDDVLN (70 aa)) are disordered. Over residues 254–269 (SPERKEKKINSMEGYH) the composition is skewed to basic and acidic residues.

It belongs to the PRM5 family.

The protein resides in the vacuole membrane. This chain is Vacuolar membrane protein FOSTERSO_4058, found in Saccharomyces cerevisiae (strain FostersO) (Baker's yeast).